The chain runs to 1222 residues: A disintegrin and metalloproteinase with thrombospondin motifs 16 (1222 aa).

Positions 1-20 (MESRGCAALWVLLLAQVSEQ) are cleaved as a signal peptide. Residues 21-277 (QTPACALGLA…EYKPSSRHKR (257 aa)) constitute a propeptide that is removed on maturation. Residues Asn-154 and Asn-190 are each glycosylated (N-linked (GlcNAc...) asparagine). A Cysteine switch motif is present at residues 245-253 (HFCGRRKKY). Cys-247 provides a ligand contact to Zn(2+). Positions 288–493 (LNVETLVVVD…AQAICLADQP (206 aa)) constitute a Peptidase M12B domain. Asn-308 carries an N-linked (GlcNAc...) asparagine glycan. Cystine bridges form between Cys-364–Cys-415, Cys-390–Cys-397, Cys-409–Cys-488, Cys-448–Cys-472, Cys-516–Cys-541, Cys-527–Cys-548, Cys-536–Cys-567, Cys-561–Cys-572, Cys-596–Cys-633, Cys-600–Cys-638, and Cys-611–Cys-623. His-431 serves as a coordination point for Zn(2+). The active site involves Glu-432. Zn(2+) contacts are provided by His-435 and His-441. In terms of domain architecture, Disintegrin spans 494 to 583 (KPVKEYKYPE…KYGDEGPKPT (90 aa)). Residues 584 to 639 (HGHWSDWSPWSPCSRTCGGGISHRDRLCTNPRPSHGGKFCQGSTRTLKLCNSQRCP) form the TSP type-1 1 domain. Asn-739, Asn-778, Asn-825, Asn-833, Asn-903, and Asn-933 each carry an N-linked (GlcNAc...) asparagine glycan. The spacer stretch occupies residues 745–871 (THRGLYSKHH…KTPAAQPSYS (127 aa)). TSP type-1 domains follow at residues 872–920 (WAIV…LVPC), 925–985 (CPSS…QSCP), 986–1046 (PAWS…KRCH), 1049–1113 (KKLQ…IPCP), and 1125–1179 (RGSW…HFCP). The PLAC domain maps to 1184 to 1221 (RGTFCKDLFHWCYLVPQHGMCGHRFYSKQCCNTCSKSN).

Zn(2+) is required as a cofactor. The precursor is cleaved by a furin endopeptidase. In terms of processing, glycosylated. Can be O-fucosylated by POFUT2 on a serine or a threonine residue found within the consensus sequence C1-X(2)-(S/T)-C2-G of the TSP type-1 repeat domains where C1 and C2 are the first and second cysteine residue of the repeat, respectively. Fucosylated repeats can then be further glycosylated by the addition of a beta-1,3-glucose residue by the glucosyltransferase, B3GALTL. Fucosylation mediates the efficient secretion of ADAMTS family members. Can also be C-glycosylated with one or two mannose molecules on tryptophan residues within the consensus sequence W-X-X-W of the TPRs, and N-glycosylated. These other glycosylations can also facilitate secretion.

It is found in the secreted. It localises to the extracellular space. Its subcellular location is the extracellular matrix. In Mus musculus (Mouse), this protein is A disintegrin and metalloproteinase with thrombospondin motifs 16 (Adamts16).